A 127-amino-acid chain; its full sequence is Small ribosomal subunit protein uS12 (127 aa).

Positions 1–28 (MPTIQQLIRDERSKAKRKTKSPALKQCP) are disordered. Asp-89 bears the 3-methylthioaspartic acid mark. Residues 104 to 127 (ATGVKNRQKARSKYGTKRPKPAAK) form a disordered region. Basic residues predominate over residues 109–127 (NRQKARSKYGTKRPKPAAK).

Belongs to the universal ribosomal protein uS12 family. Part of the 30S ribosomal subunit. Contacts proteins S8 and S17. May interact with IF1 in the 30S initiation complex.

Functionally, with S4 and S5 plays an important role in translational accuracy. Interacts with and stabilizes bases of the 16S rRNA that are involved in tRNA selection in the A site and with the mRNA backbone. Located at the interface of the 30S and 50S subunits, it traverses the body of the 30S subunit contacting proteins on the other side and probably holding the rRNA structure together. The combined cluster of proteins S8, S12 and S17 appears to hold together the shoulder and platform of the 30S subunit. This chain is Small ribosomal subunit protein uS12, found in Microcystis aeruginosa (strain NIES-843 / IAM M-2473).